The sequence spans 436 residues: Indole-3-acetyl-aspartic acid hydrolase (436 aa).

The protein belongs to the peptidase M20 family. Monomer.

The enzyme catalyses (indol-3-yl)acetyl-L-aspartate + H2O = (indol-3-yl)acetate + L-aspartate. Functionally, hydrolyzes indole-3-acetyl-aspartate (IAA-Asp) to indole-3-acetic acid (IAA). Shows an exclusively high substrate specificity for IAA-Asp. The polypeptide is Indole-3-acetyl-aspartic acid hydrolase (Enterobacter agglomerans (Erwinia herbicola)).